A 498-amino-acid chain; its full sequence is ATP synthase subunit beta, chloroplastic (498 aa).

ATP is bound at residue 172–179; that stretch reads GGAGVGKT.

This sequence belongs to the ATPase alpha/beta chains family. As to quaternary structure, F-type ATPases have 2 components, CF(1) - the catalytic core - and CF(0) - the membrane proton channel. CF(1) has five subunits: alpha(3), beta(3), gamma(1), delta(1), epsilon(1). CF(0) has four main subunits: a(1), b(1), b'(1) and c(9-12).

The protein localises to the plastid. It localises to the chloroplast thylakoid membrane. It catalyses the reaction ATP + H2O + 4 H(+)(in) = ADP + phosphate + 5 H(+)(out). Its function is as follows. Produces ATP from ADP in the presence of a proton gradient across the membrane. The catalytic sites are hosted primarily by the beta subunits. The chain is ATP synthase subunit beta, chloroplastic from Salacca zalacca (Snake palm).